Reading from the N-terminus, the 195-residue chain is MSTMIDIRRLQTVNELAREGASTVAENMSQLTGVETQMQITKINVIDVEDLGAHLGAAKQVGVSVPLKEQPYGSVLVLFDDESARRVAGTMMGGIESEGGGYSDMERSAIREVGNIMTSGFIDGWANVLGRTIDISTPQLIRASGEDIASHCVDPGEHEIAMVFDAELHAPDANVEAKIYSFPDIEAFVSMINSI.

The protein belongs to the CheC family.

Its function is as follows. Catalyzes the dephosphorylation of CheY-P. In Halobacterium salinarum (strain ATCC 29341 / DSM 671 / R1), this protein is Putative CheY-P phosphatase CheC1 (cheC1).